We begin with the raw amino-acid sequence, 275 residues long: 2-dehydro-3-deoxyphosphooctonate aldolase (275 aa).

The protein belongs to the KdsA family.

It is found in the cytoplasm. The catalysed reaction is D-arabinose 5-phosphate + phosphoenolpyruvate + H2O = 3-deoxy-alpha-D-manno-2-octulosonate-8-phosphate + phosphate. The protein operates within carbohydrate biosynthesis; 3-deoxy-D-manno-octulosonate biosynthesis; 3-deoxy-D-manno-octulosonate from D-ribulose 5-phosphate: step 2/3. Its pathway is bacterial outer membrane biogenesis; lipopolysaccharide biosynthesis. This chain is 2-dehydro-3-deoxyphosphooctonate aldolase, found in Francisella philomiragia subsp. philomiragia (strain ATCC 25017 / CCUG 19701 / FSC 153 / O#319-036).